Reading from the N-terminus, the 357-residue chain is Homoserine kinase (357 aa).

This sequence belongs to the GHMP kinase family. Homoserine kinase subfamily.

It catalyses the reaction L-homoserine + ATP = O-phospho-L-homoserine + ADP + H(+). It participates in amino-acid biosynthesis; L-threonine biosynthesis; L-threonine from L-aspartate: step 4/5. Functionally, commits homoserine to the threonine biosynthesis pathway by catalyzing its O-phosphorylation. The protein is Homoserine kinase of Cryptococcus neoformans var. grubii serotype A (strain H99 / ATCC 208821 / CBS 10515 / FGSC 9487) (Filobasidiella neoformans var. grubii).